Consider the following 231-residue polypeptide: 5'-methylthioadenosine/S-adenosylhomocysteine nucleosidase (231 aa).

Glu12 acts as the Proton acceptor in catalysis. Substrate-binding positions include Gly78, Ile153, and 174-175; that span reads ME. Residue Asp198 is the Proton donor of the active site.

Belongs to the PNP/UDP phosphorylase family. MtnN subfamily.

The enzyme catalyses S-adenosyl-L-homocysteine + H2O = S-(5-deoxy-D-ribos-5-yl)-L-homocysteine + adenine. It catalyses the reaction S-methyl-5'-thioadenosine + H2O = 5-(methylsulfanyl)-D-ribose + adenine. It carries out the reaction 5'-deoxyadenosine + H2O = 5-deoxy-D-ribose + adenine. It participates in amino-acid biosynthesis; L-methionine biosynthesis via salvage pathway; S-methyl-5-thio-alpha-D-ribose 1-phosphate from S-methyl-5'-thioadenosine (hydrolase route): step 1/2. In terms of biological role, catalyzes the irreversible cleavage of the glycosidic bond in both 5'-methylthioadenosine (MTA) and S-adenosylhomocysteine (SAH/AdoHcy) to adenine and the corresponding thioribose, 5'-methylthioribose and S-ribosylhomocysteine, respectively. Also cleaves 5'-deoxyadenosine, a toxic by-product of radical S-adenosylmethionine (SAM) enzymes, into 5-deoxyribose and adenine. This is 5'-methylthioadenosine/S-adenosylhomocysteine nucleosidase from Maridesulfovibrio salexigens (strain ATCC 14822 / DSM 2638 / NCIMB 8403 / VKM B-1763) (Desulfovibrio salexigens).